The sequence spans 213 residues: Thiamine-phosphate synthase (213 aa).

Residues 40–44 (QFREK) and Asn-75 each bind 4-amino-2-methyl-5-(diphosphooxymethyl)pyrimidine. Residues Asp-76 and Asp-95 each contribute to the Mg(2+) site. Position 113 (Ser-113) interacts with 4-amino-2-methyl-5-(diphosphooxymethyl)pyrimidine. 139–141 (TPS) contacts 2-[(2R,5Z)-2-carboxy-4-methylthiazol-5(2H)-ylidene]ethyl phosphate. Lys-142 provides a ligand contact to 4-amino-2-methyl-5-(diphosphooxymethyl)pyrimidine. 2-[(2R,5Z)-2-carboxy-4-methylthiazol-5(2H)-ylidene]ethyl phosphate is bound by residues Gly-171 and 191 to 192 (IS).

This sequence belongs to the thiamine-phosphate synthase family. Requires Mg(2+) as cofactor.

It carries out the reaction 2-[(2R,5Z)-2-carboxy-4-methylthiazol-5(2H)-ylidene]ethyl phosphate + 4-amino-2-methyl-5-(diphosphooxymethyl)pyrimidine + 2 H(+) = thiamine phosphate + CO2 + diphosphate. The enzyme catalyses 2-(2-carboxy-4-methylthiazol-5-yl)ethyl phosphate + 4-amino-2-methyl-5-(diphosphooxymethyl)pyrimidine + 2 H(+) = thiamine phosphate + CO2 + diphosphate. It catalyses the reaction 4-methyl-5-(2-phosphooxyethyl)-thiazole + 4-amino-2-methyl-5-(diphosphooxymethyl)pyrimidine + H(+) = thiamine phosphate + diphosphate. It participates in cofactor biosynthesis; thiamine diphosphate biosynthesis; thiamine phosphate from 4-amino-2-methyl-5-diphosphomethylpyrimidine and 4-methyl-5-(2-phosphoethyl)-thiazole: step 1/1. In terms of biological role, condenses 4-methyl-5-(beta-hydroxyethyl)thiazole monophosphate (THZ-P) and 2-methyl-4-amino-5-hydroxymethyl pyrimidine pyrophosphate (HMP-PP) to form thiamine monophosphate (TMP). This chain is Thiamine-phosphate synthase, found in Staphylococcus aureus (strain MSSA476).